A 718-amino-acid polypeptide reads, in one-letter code: Quinolinate synthase, chloroplastic (718 aa).

Positions 1–22 are enriched in low complexity; that stretch reads MALALSVAPTSSSLSSLLSRTP. Residues 1 to 29 are disordered; it reads MALALSVAPTSSSLSSLLSRTPNPSPNFR. The N-terminal 70 residues, 1 to 70, are a transit peptide targeting the chloroplast; it reads MALALSVAPT…VNASPFSISA (70 aa). The active-site Cysteine persulfide intermediate is the Cys132. Residues His280 and Ser306 each contribute to the iminosuccinate site. Cys360 serves as a coordination point for [4Fe-4S] cluster. Iminosuccinate-binding positions include 389 to 391 and Ser411; that span reads YIN. [4Fe-4S] cluster is bound at residue Cys484. Iminosuccinate is bound by residues 510 to 512 and Thr535; that span reads HLE. Cys640 lines the [4Fe-4S] cluster pocket.

This sequence belongs to the quinolinate synthase family. Type 1 subfamily. In terms of assembly, homodimer. Interacts in vitro with NFS2, CpNIFS3 and AO. Part of a Cys defulfurase complex. The cofactor is [4Fe-4S] cluster. As to expression, expressed in roots, leaves, stems and flowers.

Its subcellular location is the plastid. It is found in the chloroplast. The enzyme catalyses iminosuccinate + dihydroxyacetone phosphate = quinolinate + phosphate + 2 H2O + H(+). It functions in the pathway cofactor biosynthesis; NAD(+) biosynthesis; quinolinate from iminoaspartate: step 1/1. Catalyzes the condensation of iminoaspartate with dihydroxyacetone phosphate to form quinolinate. Can complement nadA-deficient E.coli mutant. Essential for the de novo synthesis of NAD. Also participates in cysteine desulfurization mediated by NFS2. Can activate the cysteine desulfurase activity of NFS2 in vitro. This chain is Quinolinate synthase, chloroplastic, found in Arabidopsis thaliana (Mouse-ear cress).